A 190-amino-acid chain; its full sequence is Large ribosomal subunit protein uL22 (190 aa).

A disordered region spans residues 111-190 (SVQSTKAKAK…TKKKTEGEEK (80 aa)). The segment covering 125 to 147 (IKSEDSKNSLKVTESKADSKVDA) has biased composition (basic and acidic residues). Residues 167-178 (AKVATTKSTATR) are compositionally biased toward low complexity.

It belongs to the universal ribosomal protein uL22 family. As to quaternary structure, part of the 50S ribosomal subunit.

Functionally, this protein binds specifically to 23S rRNA; its binding is stimulated by other ribosomal proteins, e.g. L4, L17, and L20. It is important during the early stages of 50S assembly. It makes multiple contacts with different domains of the 23S rRNA in the assembled 50S subunit and ribosome. In terms of biological role, the globular domain of the protein is located near the polypeptide exit tunnel on the outside of the subunit, while an extended beta-hairpin is found that lines the wall of the exit tunnel in the center of the 70S ribosome. The protein is Large ribosomal subunit protein uL22 of Helicobacter hepaticus (strain ATCC 51449 / 3B1).